We begin with the raw amino-acid sequence, 454 residues long: B-cell lymphoma 3 protein (454 aa).

Residues 1 to 50 form a disordered region; the sequence is MPRCPAGAMDEGPVDLRTRPKAAGLPGAALPLRKRPLRAPSPEPAAPRGA. A compositionally biased stretch (low complexity) spans 21 to 31; it reads KAAGLPGAALP. Ser41 carries the post-translational modification Phosphoserine. 7 ANK repeats span residues 134–163, 171–200, 204–235, 241–270, 275–304, 308–337, and 338–367; these read DGDT…QGGR, LRQT…SPMA, HGQT…TLDL, DGLT…DIDA, SGRS…NVNA, SGSS…DSSL, and KNCH…RPAS. Residues 360–454 form a disordered region; the sequence is GKATRPASTS…VPPSPAPGGS (95 aa). Positions 365–381 are enriched in polar residues; the sequence is PASTSQPDPSPDRSANT. Ser374 carries the post-translational modification Phosphoserine. The span at 382–404 shows a compositional bias: low complexity; the sequence is SPESSSRLSSNGLLSASPSSSPS. Phosphoserine; by GSK3 is present on residues Ser402 and Ser406. A compositionally biased stretch (pro residues) spans 405-418; that stretch reads QSPPRDPPGFPMAP. Over residues 432–442 the composition is skewed to low complexity; that stretch reads LPFAGVLRGPG. Residues 443-454 are compositionally biased toward pro residues; that stretch reads RPVPPSPAPGGS.

In terms of assembly, component of a complex consisting of the NF-kappa-B p52-p52 homodimer and BCL3. Component of a complex consisting of the NF-kappa-B p50-p50 homodimer and BCL3. Interacts with N4BP2, COPS5 and PIR. Interacts with CYLD. Post-translationally, polyubiquitinated. Ubiquitination via 'Lys-63'-linked ubiquitin chains is required for nuclear accumulation. Deubiquitinated by CYLD, which acts on 'Lys-63'-linked ubiquitin chains. Deubiquitination by CYLD prevents nuclear accumulation. In terms of processing, activated by phosphorylation.

It is found in the nucleus. Its subcellular location is the cytoplasm. The protein localises to the perinuclear region. Functionally, contributes to the regulation of transcriptional activation of NF-kappa-B target genes. In the cytoplasm, inhibits the nuclear translocation of the NF-kappa-B p50 subunit. In the nucleus, acts as transcriptional activator that promotes transcription of NF-kappa-B target genes. Contributes to the regulation of cell proliferation. The sequence is that of B-cell lymphoma 3 protein (BCL3) from Homo sapiens (Human).